The following is a 65-amino-acid chain: UPF0434 protein Rpal_0270 (65 aa).

This sequence belongs to the UPF0434 family.

In Rhodopseudomonas palustris (strain TIE-1), this protein is UPF0434 protein Rpal_0270.